The chain runs to 523 residues: Probable aminopeptidase NPEPL1 (523 aa).

Positions 260 and 265 each coordinate Zn(2+). The active site involves lysine 272. Positions 283, 342, and 344 each coordinate Zn(2+). The active site involves arginine 346.

The protein belongs to the peptidase M17 family. The cofactor is Zn(2+). It depends on Mn(2+) as a cofactor. As to expression, ubiquitously expressed.

Its function is as follows. Probably catalyzes the removal of unsubstituted N-terminal amino acids from various peptides. This is Probable aminopeptidase NPEPL1 (NPEPL1) from Homo sapiens (Human).